A 568-amino-acid chain; its full sequence is TWiK family of potassium channels protein 9 (568 aa).

The Cytoplasmic portion of the chain corresponds to 1–15 (MKCSFHIPEKYQWAS). A helical membrane pass occupies residues 16–36 (TLFVHVALIAGVAVYTVFGAL). Positions 163 to 183 (IGNSVIFAFTVITTIGYGHVA) form an intramembrane region, pore-forming. A helical transmembrane segment spans residues 191 to 211 (LFLIFYGVIGVPFTLLTIADL). At 212-316 (GMFLTRFLKN…NNEPRKTEES (105 aa)) the chain is on the cytoplasmic side. 2 disordered regions span residues 243–262 (QRNK…RSEV) and 274–314 (MRTA…RKTE). The span at 297-307 (GKEEDEEEPEN) shows a compositional bias: acidic residues. Residues 317–337 (IALGITFTCYLVAGAKILSVY) form a helical membrane-spanning segment. The segment at residues 343 to 363 (FFKALYFNFVTLTTIGLGDFV) is an intramembrane region (pore-forming). A helical membrane pass occupies residues 370 to 390 (LLITLIYIGIGLALTTMAIEI). The Cytoplasmic segment spans residues 391–568 (AADLLKKLHY…LRTYTNARRK (178 aa)).

This sequence belongs to the two pore domain potassium channel (TC 1.A.1.8) family. In terms of tissue distribution, expressed in ray A-type neurons and cell bodies. Also seen in head, pharyngeal and phasmid neurons, and in coelomocytes.

The protein resides in the membrane. Functionally, potassium channel protein that may be component of regulatory network that controls ray development and function. The polypeptide is TWiK family of potassium channels protein 9 (twk-9) (Caenorhabditis elegans).